The primary structure comprises 122 residues: Immunoglobulin lambda variable 8-61 (122 aa).

The N-terminal stretch at 1–24 is a signal peptide; that stretch reads MSVPTMAWMMLLLGLLAYGSGVDS. The interval 25 to 49 is framework-1; sequence QTVVTQEPSFSVSPGGTVTLTCGLS. The 98-residue stretch at 25–122 folds into the Ig-like domain; it reads QTVVTQEPSF…YCVLYMGSGI (98 aa). C46 and C114 are joined by a disulfide. The tract at residues 50 to 58 is complementarity-determining-1; the sequence is SGSVSTSYY. Positions 59–75 are framework-2; the sequence is PSWYQQTPGQAPRTLIY. The complementarity-determining-2 stretch occupies residues 76 to 78; it reads STN. The interval 79-114 is framework-3; it reads TRSSGVPDRFSGSILGNKAALTITGAQADDESDYYC. The segment at 115–122 is complementarity-determining-3; that stretch reads VLYMGSGI.

In terms of assembly, immunoglobulins are composed of two identical heavy chains and two identical light chains; disulfide-linked.

It localises to the secreted. It is found in the cell membrane. In terms of biological role, v region of the variable domain of immunoglobulin light chains that participates in the antigen recognition. Immunoglobulins, also known as antibodies, are membrane-bound or secreted glycoproteins produced by B lymphocytes. In the recognition phase of humoral immunity, the membrane-bound immunoglobulins serve as receptors which, upon binding of a specific antigen, trigger the clonal expansion and differentiation of B lymphocytes into immunoglobulins-secreting plasma cells. Secreted immunoglobulins mediate the effector phase of humoral immunity, which results in the elimination of bound antigens. The antigen binding site is formed by the variable domain of one heavy chain, together with that of its associated light chain. Thus, each immunoglobulin has two antigen binding sites with remarkable affinity for a particular antigen. The variable domains are assembled by a process called V-(D)-J rearrangement and can then be subjected to somatic hypermutations which, after exposure to antigen and selection, allow affinity maturation for a particular antigen. The polypeptide is Immunoglobulin lambda variable 8-61 (Homo sapiens (Human)).